A 457-amino-acid chain; its full sequence is Bifunctional protein GlmU (457 aa).

The interval 1–227 (MTQLSVVILA…FMEVEGANNR (227 aa)) is pyrophosphorylase. UDP-N-acetyl-alpha-D-glucosamine contacts are provided by residues 9–12 (LAAG), Lys-23, Gln-74, 79–80 (GT), 101–103 (YGD), Gly-138, Glu-152, Asn-167, and Asn-225. Asp-103 is a Mg(2+) binding site. Mg(2+) is bound at residue Asn-225. Residues 228–248 (LQLAALERFYQKTQAEKLLLA) are linker. The interval 249–457 (GVRLIDPARF…QRPTKKKIAD (209 aa)) is N-acetyltransferase. The UDP-N-acetyl-alpha-D-glucosamine site is built by Arg-331 and Lys-349. His-361 acts as the Proton acceptor in catalysis. The UDP-N-acetyl-alpha-D-glucosamine site is built by Tyr-364 and Asn-375. Acetyl-CoA is bound by residues Ala-378, 384 to 385 (NY), Ser-403, Ala-421, and Arg-438.

This sequence in the N-terminal section; belongs to the N-acetylglucosamine-1-phosphate uridyltransferase family. The protein in the C-terminal section; belongs to the transferase hexapeptide repeat family. As to quaternary structure, homotrimer. Requires Mg(2+) as cofactor.

Its subcellular location is the cytoplasm. It catalyses the reaction alpha-D-glucosamine 1-phosphate + acetyl-CoA = N-acetyl-alpha-D-glucosamine 1-phosphate + CoA + H(+). The enzyme catalyses N-acetyl-alpha-D-glucosamine 1-phosphate + UTP + H(+) = UDP-N-acetyl-alpha-D-glucosamine + diphosphate. The protein operates within nucleotide-sugar biosynthesis; UDP-N-acetyl-alpha-D-glucosamine biosynthesis; N-acetyl-alpha-D-glucosamine 1-phosphate from alpha-D-glucosamine 6-phosphate (route II): step 2/2. It participates in nucleotide-sugar biosynthesis; UDP-N-acetyl-alpha-D-glucosamine biosynthesis; UDP-N-acetyl-alpha-D-glucosamine from N-acetyl-alpha-D-glucosamine 1-phosphate: step 1/1. It functions in the pathway bacterial outer membrane biogenesis; LPS lipid A biosynthesis. Catalyzes the last two sequential reactions in the de novo biosynthetic pathway for UDP-N-acetylglucosamine (UDP-GlcNAc). The C-terminal domain catalyzes the transfer of acetyl group from acetyl coenzyme A to glucosamine-1-phosphate (GlcN-1-P) to produce N-acetylglucosamine-1-phosphate (GlcNAc-1-P), which is converted into UDP-GlcNAc by the transfer of uridine 5-monophosphate (from uridine 5-triphosphate), a reaction catalyzed by the N-terminal domain. The sequence is that of Bifunctional protein GlmU from Actinobacillus pleuropneumoniae serotype 5b (strain L20).